The chain runs to 160 residues: Thialysine N-epsilon-acetyltransferase (160 aa).

Residues F4–D159 form the N-acetyltransferase domain. Residues L84–I86, R92–R97, N123–A126, and Y130–V133 contribute to the acetyl-CoA site.

The protein belongs to the acetyltransferase family. In terms of assembly, homodimer.

It catalyses the reaction S-(2-aminoethyl)-L-cysteine + acetyl-CoA = S-(2-acetamidoethyl)-L-cysteine + CoA + H(+). The enzyme catalyses O-(2-aminoethyl)-L-serine + acetyl-CoA = O-(2-acetamidoethyl)-L-serine + CoA + H(+). It carries out the reaction S-(2-aminoethyl)-homocysteine + acetyl-CoA = S-(2-acetamidoethyl)-homocysteine + CoA + H(+). Its function is as follows. Catalyzes the N-acetylation of the amino acid thialysine (S-(2-aminoethyl)-L-cysteine), a L-lysine analog with the 4-methylene group substituted with a sulfur. Substrate specificity: thialysine &gt; O-(2-aminoethyl)-L-serine &gt; S-(2-aminoethyl)-D,L-homocysteine. Does not act on polyamines, such as spermidine and spermine, nor on diamines putrescine and cadaverine. The chain is Thialysine N-epsilon-acetyltransferase from Caenorhabditis elegans.